A 400-amino-acid chain; its full sequence is NADH-ubiquinone oxidoreductase 49 kDa subunit (400 aa).

This sequence belongs to the complex I 49 kDa subunit family.

Its subcellular location is the mitochondrion. The catalysed reaction is a ubiquinone + NADH + 5 H(+)(in) = a ubiquinol + NAD(+) + 4 H(+)(out). Core subunit of the mitochondrial membrane respiratory chain NADH dehydrogenase (Complex I) that is believed to belong to the minimal assembly required for catalysis. Complex I functions in the transfer of electrons from NADH to the respiratory chain. The immediate electron acceptor for the enzyme is believed to be ubiquinone. Component of the iron-sulfur (IP) fragment of the enzyme. Component of the iron-sulfur (IP) fragment of the enzyme. This is NADH-ubiquinone oxidoreductase 49 kDa subunit (NAD7) from Paramecium tetraurelia.